The chain runs to 217 residues: Probable transaldolase (217 aa).

Catalysis depends on Lys-83, which acts as the Schiff-base intermediate with substrate.

The protein belongs to the transaldolase family. Type 3B subfamily.

The protein localises to the cytoplasm. The catalysed reaction is D-sedoheptulose 7-phosphate + D-glyceraldehyde 3-phosphate = D-erythrose 4-phosphate + beta-D-fructose 6-phosphate. Its pathway is carbohydrate degradation; pentose phosphate pathway; D-glyceraldehyde 3-phosphate and beta-D-fructose 6-phosphate from D-ribose 5-phosphate and D-xylulose 5-phosphate (non-oxidative stage): step 2/3. Transaldolase is important for the balance of metabolites in the pentose-phosphate pathway. This chain is Probable transaldolase, found in Pseudothermotoga lettingae (strain ATCC BAA-301 / DSM 14385 / NBRC 107922 / TMO) (Thermotoga lettingae).